The primary structure comprises 211 residues: Thymidylate kinase (211 aa).

11–18 (GPDGAGKT) provides a ligand contact to ATP.

This sequence belongs to the thymidylate kinase family.

It catalyses the reaction dTMP + ATP = dTDP + ADP. In terms of biological role, phosphorylation of dTMP to form dTDP in both de novo and salvage pathways of dTTP synthesis. This is Thymidylate kinase from Streptococcus pyogenes serotype M49 (strain NZ131).